We begin with the raw amino-acid sequence, 425 residues long: UPF0597 protein Swoo_4889 (425 aa).

This sequence belongs to the UPF0597 family.

The protein is UPF0597 protein Swoo_4889 of Shewanella woodyi (strain ATCC 51908 / MS32).